A 287-amino-acid polypeptide reads, in one-letter code: Small ribosomal subunit biogenesis GTPase RsgA (287 aa).

Residues 61 to 218 (SSELIRPTVA…LVDTPGFTTL (158 aa)) enclose the CP-type G domain. GTP is bound by residues 110–113 (NKED) and 161–169 (GPSGAGKST). 4 residues coordinate Zn(2+): Cys-242, Cys-247, His-249, and Cys-255.

Belongs to the TRAFAC class YlqF/YawG GTPase family. RsgA subfamily. As to quaternary structure, monomer. Associates with 30S ribosomal subunit, binds 16S rRNA. Zn(2+) serves as cofactor.

The protein localises to the cytoplasm. One of several proteins that assist in the late maturation steps of the functional core of the 30S ribosomal subunit. Helps release RbfA from mature subunits. May play a role in the assembly of ribosomal proteins into the subunit. Circularly permuted GTPase that catalyzes slow GTP hydrolysis, GTPase activity is stimulated by the 30S ribosomal subunit. The sequence is that of Small ribosomal subunit biogenesis GTPase RsgA from Clostridium perfringens (strain ATCC 13124 / DSM 756 / JCM 1290 / NCIMB 6125 / NCTC 8237 / Type A).